The sequence spans 3096 residues: Cilia- and flagella-associated protein 54 (3096 aa).

Positions 1–45 (MAAQGSPSSSPSDDSTTSGSLPELPPTSTATSRSPPESKGSSRSS) are enriched in low complexity. Disordered regions lie at residues 1 to 46 (MAAQ…RSSL) and 1248 to 1267 (SNEQEEMPEEDSSKKSLKTK).

This sequence belongs to the CFAP54 family.

It is found in the cytoplasm. The protein resides in the cytoskeleton. It localises to the cilium axoneme. Its function is as follows. Required for assembly and function of cilia and flagella. In Homo sapiens (Human), this protein is Cilia- and flagella-associated protein 54.